The chain runs to 192 residues: Protein CREG1 (192 aa).

The first 18 residues, 1-18 (MVLLAFLCAAALAALARG), serve as a signal peptide directing secretion. N-linked (GlcNAc...) asparagine glycans are attached at residues Asn95, Asn133, and Asn166.

The protein belongs to the CREG family.

The protein resides in the secreted. Functionally, may contribute to the transcriptional control of cell growth and differentiation. The polypeptide is Protein CREG1 (CREG1) (Gallus gallus (Chicken)).